We begin with the raw amino-acid sequence, 315 residues long: MTEQLPLALFLMGPTASGKTELAIRLRQRYPVELISVDSALIYKGMDIGTAKPDEREQQLAPHRLIDILDPTEAYSAADFRRDALAAMNEIVAQGKIPLLVGGTMLYFKALLEGLSPLPAANAEIRQQIEQEALTKGWSVLHDELQEIDPVSAARIHPNDPQRLSRALEVYRISGKTLTELTETKGESLPFRVKQFAIAPKERAELHRRIELRFDKMMEAGFEQEMRALYTRKDLHPDLPSIRCVGYRQMWDYLDGNCTLDEAIYRGICATRQLAKRQITWLRSWDNLTWLDSENIEQSLETLSEAIASDRDSCV.

An ATP-binding site is contributed by 13–20 (GPTASGKT). 15–20 (TASGKT) is a substrate binding site. 4 interaction with substrate tRNA regions span residues 38 to 41 (DSAL), 162 to 166 (QRLSR), 243 to 248 (RCVGYR), and 276 to 283 (KRQITWLR).

This sequence belongs to the IPP transferase family. As to quaternary structure, monomer. It depends on Mg(2+) as a cofactor.

The catalysed reaction is adenosine(37) in tRNA + dimethylallyl diphosphate = N(6)-dimethylallyladenosine(37) in tRNA + diphosphate. Functionally, catalyzes the transfer of a dimethylallyl group onto the adenine at position 37 in tRNAs that read codons beginning with uridine, leading to the formation of N6-(dimethylallyl)adenosine (i(6)A). This Vibrio vulnificus (strain CMCP6) protein is tRNA dimethylallyltransferase.